The sequence spans 157 residues: Nascent polypeptide-associated complex subunit beta-1 (157 aa).

Disordered regions lie at residues 19–42 (KVGG…KDDT) and 126–157 (EKHE…ADVE). Residues 38 to 103 (NKDDTKLQSQ…PQEKNLQDLF (66 aa)) enclose the NAC-A/B domain. The segment covering 126–142 (EKHEAKAPADAEKKDEA) has biased composition (basic and acidic residues). Residue Thr-151 is modified to Phosphothreonine.

This sequence belongs to the NAC-beta family. As to quaternary structure, part of the nascent polypeptide-associated complex (NAC), consisting of EGD2 and either EGD1 or BTT1. NAC associates with ribosomes via EGD1 or BTT1, and with the CCR4-NOT complex.

The protein resides in the cytoplasm. The protein localises to the nucleus. Its function is as follows. Component of the nascent polypeptide-associated complex (NAC), a dynamic component of the ribosomal exit tunnel, protecting the emerging polypeptides from interaction with other cytoplasmic proteins to ensure appropriate nascent protein targeting. The NAC complex also promotes mitochondrial protein import by enhancing productive ribosome interactions with the outer mitochondrial membrane and blocks the inappropriate interaction of ribosomes translating non-secretory nascent polypeptides with translocation sites in the membrane of the endoplasmic reticulum. EGD1 may act as a transcription factor that exert a negative effect on the expression of several genes that are transcribed by RNA polymerase II. The polypeptide is Nascent polypeptide-associated complex subunit beta-1 (EGD1) (Saccharomyces cerevisiae (strain YJM789) (Baker's yeast)).